The chain runs to 166 residues: MSVNMEDLRHQVMINQFVLAAGCAADQAKQLLQAAHWQFETALSAFFQESNVPSAQHHTHMMCTPSNTPATPPNFPDALAMFSKLRTSESLQNSSSPAASNACSPPGNFNPYWASSPPNQQPVWLPPASPTTHLHHHHHHPQPVWPPNSQPTGGPQKAMAAMDGQR.

Residues 120–166 form a disordered region; that stretch reads QQPVWLPPASPTTHLHHHHHHPQPVWPPNSQPTGGPQKAMAAMDGQR.

This sequence belongs to the UBALD family.

The sequence is that of UBA-like domain-containing protein 2-A (ubald2-a) from Xenopus laevis (African clawed frog).